A 501-amino-acid chain; its full sequence is Glycerol kinase (501 aa).

An ADP-binding site is contributed by Thr14. 3 residues coordinate ATP: Thr14, Thr15, and Ser16. Thr14 contacts sn-glycerol 3-phosphate. Residue Arg18 participates in ADP binding. The sn-glycerol 3-phosphate site is built by Arg84, Glu85, and Tyr136. Residues Arg84, Glu85, and Tyr136 each contribute to the glycerol site. His231 is modified (phosphohistidine; by HPr). Asp245 is a binding site for sn-glycerol 3-phosphate. Positions 245 and 246 each coordinate glycerol. Residues Thr267 and Gly310 each contribute to the ADP site. Positions 267, 310, 314, and 411 each coordinate ATP. 2 residues coordinate ADP: Gly411 and Asn415.

This sequence belongs to the FGGY kinase family. In terms of assembly, homotetramer and homodimer (in equilibrium). The phosphoenolpyruvate-dependent sugar phosphotransferase system (PTS), including enzyme I, and histidine-containing protein (HPr) are required for the phosphorylation of His-231, which leads to the activation of the enzyme.

The enzyme catalyses glycerol + ATP = sn-glycerol 3-phosphate + ADP + H(+). Its pathway is polyol metabolism; glycerol degradation via glycerol kinase pathway; sn-glycerol 3-phosphate from glycerol: step 1/1. Activated by phosphorylation and inhibited by fructose 1,6-bisphosphate (FBP). In terms of biological role, key enzyme in the regulation of glycerol uptake and metabolism. Catalyzes the phosphorylation of glycerol to yield sn-glycerol 3-phosphate. The protein is Glycerol kinase of Enterococcus faecalis (strain ATCC 700802 / V583).